Here is an 831-residue protein sequence, read N- to C-terminus: Multiphosphoryl transfer protein (831 aa).

An HPr domain is found at 1–90 (MLTIQFLCPL…EYILVRFIDS (90 aa)). The Pros-phosphohistidine intermediate; for HPr activity role is filled by His-15. Phosphohistidine; by EI is present on His-15. Positions 119-650 (GNVLASGVGV…AVKSQLRQLD (532 aa)) are PTS EI. His-298 functions as the Tele-phosphohistidine intermediate; for PTS EI activity in the catalytic mechanism. His-298 carries the post-translational modification Phosphohistidine; by autocatalysis. Phosphoenolpyruvate is bound by residues Arg-405 and Arg-441. The Mg(2+) site is built by Glu-540 and Asp-564. Residues 563–564 (ND) and Arg-574 each bind phosphoenolpyruvate. The active-site Proton donor; for EI activity is the Cys-611. One can recognise a PTS EIIA type-2 domain in the interval 685-828 (PLLALENIFV…QSILTLLETE (144 aa)). His-747 (tele-phosphohistidine intermediate; for PTS EIIA activity) is an active-site residue. Position 747 is a phosphohistidine; by HPr (His-747).

The protein belongs to the PEP-utilizing enzyme family. Mg(2+) serves as cofactor.

The protein localises to the cytoplasm. The enzyme catalyses L-histidyl-[protein] + phosphoenolpyruvate = N(pros)-phospho-L-histidyl-[protein] + pyruvate. It catalyses the reaction D-fructose(out) + N(pros)-phospho-L-histidyl-[protein] = D-fructose 1-phosphate(in) + L-histidyl-[protein]. Its function is as follows. Multifunctional protein that includes general (non sugar-specific) and sugar-specific components of the phosphoenolpyruvate-dependent sugar phosphotransferase system (sugar PTS). This major carbohydrate active transport system catalyzes the phosphorylation of incoming sugar substrates concomitantly with their translocation across the cell membrane. The enzyme II FryABC PTS system is involved in fructose transport. This Shigella flexneri protein is Multiphosphoryl transfer protein (fryA).